The chain runs to 316 residues: UDP-N-acetylglucosamine transporter yea4 (316 aa).

Over M1–A3 the chain is Cytoplasmic. Residues S4–V24 traverse the membrane as a helical segment. Residues R25 to G31 lie on the Lumenal side of the membrane. A helical membrane pass occupies residues I32–L52. Topologically, residues N53–R67 are cytoplasmic. Residues W68 to F88 traverse the membrane as a helical segment. Residues D89–S120 are Lumenal-facing. Residues L121–A141 form a helical membrane-spanning segment. At K142–R153 the chain is on the cytoplasmic side. The helical transmembrane segment at F154 to V174 threads the bilayer. The Lumenal portion of the chain corresponds to L175–R187. The helical transmembrane segment at E188–I208 threads the bilayer. Residues R209–D214 lie on the Cytoplasmic side of the membrane. A helical transmembrane segment spans residues L215–F235. At N236–S274 the chain is on the lumenal side. A helical transmembrane segment spans residues L275 to G295. Residues S296 to D316 are Cytoplasmic-facing.

Belongs to the nucleotide-sugar transporter family. SLC35B subfamily.

Its subcellular location is the endoplasmic reticulum. It is found in the endoplasmic reticulum membrane. In terms of biological role, sugar transporter that specifically mediates the transport of UDP-N-acetylglucosamine (UDP-GlcNAc) and is required for cell wall chitin synthesis. The protein is UDP-N-acetylglucosamine transporter yea4 (yea4) of Schizosaccharomyces pombe (strain 972 / ATCC 24843) (Fission yeast).